We begin with the raw amino-acid sequence, 165 residues long: Endoribonuclease YbeY (165 aa).

Positions 130, 134, and 140 each coordinate Zn(2+).

Belongs to the endoribonuclease YbeY family. Requires Zn(2+) as cofactor.

It localises to the cytoplasm. Functionally, single strand-specific metallo-endoribonuclease involved in late-stage 70S ribosome quality control and in maturation of the 3' terminus of the 16S rRNA. The chain is Endoribonuclease YbeY from Streptococcus agalactiae serotype Ia (strain ATCC 27591 / A909 / CDC SS700).